The chain runs to 327 residues: Deoxyribonuclease (327 aa).

The segment at residues 1–24 (MSKKLRNFLVRIIVAAFASFAVMA) is a signal peptide (or 35). Positions 299-327 (DSTTDEIENSVDDSEEIVYNDTTTEEEEN) are disordered.

It carries out the reaction Endonucleolytic cleavage to 5'-phosphodinucleotide and 5'-phosphooligonucleotide end-products.. Functionally, may have a role in S.equisimilis virulence. This Streptococcus dysgalactiae subsp. equisimilis (Streptococcus equisimilis) protein is Deoxyribonuclease (sdc).